Consider the following 500-residue polypeptide: NAD(P)H-quinone oxidoreductase chain 4, chloroplastic (500 aa).

14 helical membrane passes run 4-24, 37-57, 87-107, 113-130, 134-154, 167-187, 211-231, 242-262, 272-292, 313-333, 334-354, 386-406, 417-437, and 462-482; these read FPWL…IFFL, ISIC…HFQL, VGSI…AWPV, LFYF…GLFS, LLLF…LLSM, FILY…GMGL, ILLY…IPLH, HYST…YGLI, AHYL…IYAA, MGFI…GAIL, QILS…TASD, LALP…GLIT, LITF…LSML, and LFIL…PDLV.

This sequence belongs to the complex I subunit 4 family.

The protein resides in the plastid. Its subcellular location is the chloroplast thylakoid membrane. The enzyme catalyses a plastoquinone + NADH + (n+1) H(+)(in) = a plastoquinol + NAD(+) + n H(+)(out). The catalysed reaction is a plastoquinone + NADPH + (n+1) H(+)(in) = a plastoquinol + NADP(+) + n H(+)(out). In Agrostis stolonifera (Creeping bentgrass), this protein is NAD(P)H-quinone oxidoreductase chain 4, chloroplastic.